Here is a 293-residue protein sequence, read N- to C-terminus: Ribosomal protein L11 methyltransferase (293 aa).

S-adenosyl-L-methionine is bound by residues Thr145, Gly166, Asp188, and Asn230.

It belongs to the methyltransferase superfamily. PrmA family.

It is found in the cytoplasm. The catalysed reaction is L-lysyl-[protein] + 3 S-adenosyl-L-methionine = N(6),N(6),N(6)-trimethyl-L-lysyl-[protein] + 3 S-adenosyl-L-homocysteine + 3 H(+). Functionally, methylates ribosomal protein L11. The protein is Ribosomal protein L11 methyltransferase of Citrobacter koseri (strain ATCC BAA-895 / CDC 4225-83 / SGSC4696).